A 510-amino-acid chain; its full sequence is NAD(P)H-quinone oxidoreductase subunit 2 B, chloroplastic (510 aa).

Transmembrane regions (helical) follow at residues leucine 24–leucine 44, tryptophan 59–tryptophan 79, isoleucine 99–isoleucine 119, methionine 124–cysteine 144, isoleucine 150–threonine 170, leucine 184–leucine 204, isoleucine 229–phenylalanine 249, tryptophan 295–isoleucine 315, methionine 323–aspartate 343, tyrosine 354–leucine 374, alanine 395–phenylalanine 415, leucine 418–leucine 438, and methionine 484–isoleucine 504.

The protein belongs to the complex I subunit 2 family. As to quaternary structure, NDH is composed of at least 16 different subunits, 5 of which are encoded in the nucleus.

It is found in the plastid. Its subcellular location is the chloroplast thylakoid membrane. The enzyme catalyses a plastoquinone + NADH + (n+1) H(+)(in) = a plastoquinol + NAD(+) + n H(+)(out). The catalysed reaction is a plastoquinone + NADPH + (n+1) H(+)(in) = a plastoquinol + NADP(+) + n H(+)(out). NDH shuttles electrons from NAD(P)H:plastoquinone, via FMN and iron-sulfur (Fe-S) centers, to quinones in the photosynthetic chain and possibly in a chloroplast respiratory chain. The immediate electron acceptor for the enzyme in this species is believed to be plastoquinone. Couples the redox reaction to proton translocation, and thus conserves the redox energy in a proton gradient. The chain is NAD(P)H-quinone oxidoreductase subunit 2 B, chloroplastic from Acorus calamus (Sweet flag).